The following is a 23-amino-acid chain: Conotoxin Cl6c (23 aa).

3 disulfides stabilise this stretch: Cys2–Cys12, Cys5–Cys17, and Cys11–Cys21.

In terms of tissue distribution, expressed by the venom duct.

Its subcellular location is the secreted. The sequence is that of Conotoxin Cl6c from Californiconus californicus (California cone).